The chain runs to 255 residues: MNGWVARGLARRAAALGLGLRVLLCFGLCLEIAPTPIQTWSPTQAPGPSAGSCPPTNFQCRSDGRCLPLIWRCDVDQDCPDGSDEEECGTEVPNGSPSPCDIMDDCPDHNKNLLNCGPQSCPEGELCCPLDGVCIPSTWLCDGHRDCSDYSDELGCGTKTHEEGRTMSTGTPVTLENVTYLSNATVTAIEDWDSVQSGNRNVYGIIAAVAVLSISLAAGILFALSRLCAQGCLAPLGLLVSMKGSLQPEKKTSVL.

The first 29 residues, 1–29 (MNGWVARGLARRAAALGLGLRVLLCFGLC), serve as a signal peptide directing secretion. Residues 30–203 (LEIAPTPIQT…SVQSGNRNVY (174 aa)) are Extracellular-facing. LDL-receptor class A domains follow at residues 52 to 89 (SCPPTNFQCRSDGRCLPLIWRCDVDQDCPDGSDEEECG) and 120 to 157 (SCPEGELCCPLDGVCIPSTWLCDGHRDCSDYSDELGCG). 6 disulfide bridges follow: Cys53–Cys66, Cys60–Cys79, Cys73–Cys88, Cys121–Cys134, Cys128–Cys147, and Cys141–Cys156. The Ca(2+) site is built by Trp71, Asp74, Asp76, Asp78, Asp84, and Glu85. 6 residues coordinate Ca(2+): Trp139, Asp142, His144, Asp146, Asp152, and Glu153. Asn177 and Asn183 each carry an N-linked (GlcNAc...) asparagine glycan. The helical transmembrane segment at 204-224 (GIIAAVAVLSISLAAGILFAL) threads the bilayer. At 225-255 (SRLCAQGCLAPLGLLVSMKGSLQPEKKTSVL) the chain is on the cytoplasmic side.

In terms of assembly, interacts (via LDL-receptor class A domains) with TCN2.

Its subcellular location is the cell membrane. Its function is as follows. Receptor for transcobalamin saturated with cobalamin (TCbl). Plays an important role in cobalamin uptake. Plasma membrane protein that is expressed on follicular dendritic cells (FDC) and mediates interaction with germinal center B cells. Functions as a costimulator to promote B cell responses to antigenic stimuli; promotes B cell differentiation and proliferation. Germinal center-B (GC-B) cells differentiate into memory B-cells and plasma cells (PC) through interaction with T-cells and follicular dendritic cells (FDC). CD320 augments the proliferation of PC precursors generated by IL-10. The sequence is that of CD320 antigen (CD320) from Bos taurus (Bovine).